A 246-amino-acid chain; its full sequence is tRNA (guanine-N(1)-)-methyltransferase (246 aa).

S-adenosyl-L-methionine is bound by residues Gly-114 and 134-139 (IGDYIL).

Belongs to the RNA methyltransferase TrmD family. In terms of assembly, homodimer.

Its subcellular location is the cytoplasm. The enzyme catalyses guanosine(37) in tRNA + S-adenosyl-L-methionine = N(1)-methylguanosine(37) in tRNA + S-adenosyl-L-homocysteine + H(+). In terms of biological role, specifically methylates guanosine-37 in various tRNAs. The sequence is that of tRNA (guanine-N(1)-)-methyltransferase from Coxiella burnetii (strain CbuK_Q154) (Coxiella burnetii (strain Q154)).